A 739-amino-acid polypeptide reads, in one-letter code: Eukaryotic translation initiation factor 3 subunit B (739 aa).

Residues 39–125 form the RRM domain; the sequence is AFVVIDGLPV…HTLAVNKLTD (87 aa). 5 WD repeats span residues 191 to 229, 231 to 288, 457 to 498, 516 to 559, and 574 to 612; these read RDHW…KQKQ, PHPF…RSFV, SLKD…SFFA, IEKK…EKPE, and NEHF…HTFS.

Belongs to the eIF-3 subunit B family. As to quaternary structure, component of the eukaryotic translation initiation factor 3 (eIF-3) complex.

The protein resides in the cytoplasm. Functionally, RNA-binding component of the eukaryotic translation initiation factor 3 (eIF-3) complex, which is involved in protein synthesis of a specialized repertoire of mRNAs and, together with other initiation factors, stimulates binding of mRNA and methionyl-tRNAi to the 40S ribosome. The eIF-3 complex specifically targets and initiates translation of a subset of mRNAs involved in cell proliferation. The chain is Eukaryotic translation initiation factor 3 subunit B from Coccidioides immitis (strain RS) (Valley fever fungus).